The following is a 365-amino-acid chain: Ribosome biogenesis regulatory protein homolog (365 aa).

Position 1 is an N-acetylmethionine (M1). S5 bears the Phosphoserine mark. Residues K154 and K226 each participate in a glycyl lysine isopeptide (Lys-Gly) (interchain with G-Cter in SUMO2) cross-link. The interval 233 to 253 is disordered; sequence GRFQERLPKEKVPRGSGKKRK. Positions 235–245 are enriched in basic and acidic residues; that stretch reads FQERLPKEKVP. K266 participates in a covalent cross-link: Glycyl lysine isopeptide (Lys-Gly) (interchain with G-Cter in SUMO2). R273 bears the Citrulline mark. Positions 280 to 365 are disordered; sequence PQLDVTRATN…GQRPGGKRRK (86 aa). Residues 302–325 are compositionally biased toward basic residues; that stretch reads KRRKMSQKGKRKGGRQGPGGKRKG. A compositionally biased stretch (gly residues) spans 337–350; it reads GLGGKMNSGPPGLG. Residues 351-365 are compositionally biased toward basic residues; that stretch reads GKRKGGQRPGGKRRK.

This sequence belongs to the RRS1 family. In terms of assembly, component of a hexameric 5S RNP precursor complex, composed of 5S RNA, RRS1, RPF2/BXDC1, RPL5, RPL11 and HEATR3; this complex acts as a precursor for ribosome assembly. In terms of processing, citrullinated by PADI4.

The protein resides in the nucleus. It is found in the nucleolus. Functionally, involved in ribosomal large subunit assembly. May regulate the localization of the 5S RNP/5S ribonucleoprotein particle to the nucleolus. The sequence is that of Ribosome biogenesis regulatory protein homolog (RRS1) from Homo sapiens (Human).